The sequence spans 114 residues: Iron-sulfur cluster insertion protein ErpA (114 aa).

Residues Cys42, Cys106, and Cys108 each contribute to the iron-sulfur cluster site.

It belongs to the HesB/IscA family. In terms of assembly, homodimer. The cofactor is iron-sulfur cluster.

Required for insertion of 4Fe-4S clusters for at least IspG. The protein is Iron-sulfur cluster insertion protein ErpA of Erwinia tasmaniensis (strain DSM 17950 / CFBP 7177 / CIP 109463 / NCPPB 4357 / Et1/99).